Reading from the N-terminus, the 336-residue chain is Probable tRNA N6-adenosine threonylcarbamoyltransferase (336 aa).

Positions 110, 114, and 131 each coordinate a divalent metal cation. Substrate-binding positions include 131–135, Asp163, Gly178, Glu182, and Asn267; that span reads YVSGG. Asp295 provides a ligand contact to a divalent metal cation.

This sequence belongs to the KAE1 / TsaD family. As to quaternary structure, component of the EKC/KEOPS complex; the whole complex dimerizes. It depends on a divalent metal cation as a cofactor.

It localises to the cytoplasm. The protein resides in the nucleus. It catalyses the reaction L-threonylcarbamoyladenylate + adenosine(37) in tRNA = N(6)-L-threonylcarbamoyladenosine(37) in tRNA + AMP + H(+). Its function is as follows. Component of the EKC/KEOPS complex that is required for the formation of a threonylcarbamoyl group on adenosine at position 37 (t(6)A37) in tRNAs that read codons beginning with adenine. The complex is probably involved in the transfer of the threonylcarbamoyl moiety of threonylcarbamoyl-AMP (TC-AMP) to the N6 group of A37. Osgep likely plays a direct catalytic role in this reaction, but requires other protein(s) of the complex to fulfill this activity. This Dictyostelium discoideum (Social amoeba) protein is Probable tRNA N6-adenosine threonylcarbamoyltransferase.